Here is a 579-residue protein sequence, read N- to C-terminus: Moesin a (579 aa).

The FERM domain maps to 5–295 (ISVRVTTMDA…GNHELYMRRR (291 aa)). A coiled-coil region spans residues 306–448 (KAQAKEEKNH…EDEALEWQTK (143 aa)). Disordered stretches follow at residues 308 to 341 (QAKE…EKIE), 376 to 418 (EQER…EHLA), and 464 to 519 (KNKV…KNER). Basic and acidic residues predominate over residues 376–400 (EQERKRAQEEAERLERERRLAEEAK). The segment covering 490-501 (AEASAELTSAAA) has biased composition (low complexity). Over residues 502–519 (YKDRSEEERMTEAEKNER) the composition is skewed to basic and acidic residues. Positions 517-551 (NERVQKHLLALTSELANARDETKKTQNDIIHAENV) form a coiled coil.

The protein resides in the cell membrane. It localises to the cell junction. Positively regulates endothelial adherens junction formation and stabilization. Is thereby required for intersegmental vessel luminal membrane formation and stabilization during tubulogenesis in the early stages of development, independent of blood flow dynamics. This Danio rerio (Zebrafish) protein is Moesin a.